A 291-amino-acid polypeptide reads, in one-letter code: 3-hydroxy-5-phosphonooxypentane-2,4-dione thiolase (291 aa).

Lys-203 serves as the catalytic Schiff-base intermediate with substrate.

Belongs to the DeoC/FbaB aldolase family. In terms of assembly, homodecamer.

The protein localises to the cytoplasm. The catalysed reaction is dihydroxyacetone phosphate + acetyl-CoA = 3-hydroxy-2,4-dioxopentyl phosphate + CoA. Its function is as follows. Involved in the degradation of phospho-AI-2, thereby terminating induction of the lsr operon and closing the AI-2 signaling cycle. Catalyzes the transfer of an acetyl moiety from 3-hydroxy-5-phosphonooxypentane-2,4-dione to CoA to form glycerone phosphate and acetyl-CoA. The protein is 3-hydroxy-5-phosphonooxypentane-2,4-dione thiolase of Yersinia pestis bv. Antiqua (strain Antiqua).